We begin with the raw amino-acid sequence, 234 residues long: Sugar fermentation stimulation protein homolog (234 aa).

Belongs to the SfsA family.

The polypeptide is Sugar fermentation stimulation protein homolog (Shewanella sp. (strain MR-7)).